A 334-amino-acid chain; its full sequence is MKILIEGYNKSIHKRDNQILIMEKEGELEKINIKKIDDITIIGKGSITFDALRLISENNVRLMSIDYFGKINYTLEYPSNENIFLRKQQYKTSENHKGLIIAREMIMSKMINQKSTIKTLNKNKKLENVKIFERNINEAIKQIGSLRFGERTDIEKSKMKMMGIEGSASVDYWLAVNELLPKEIGFFSRNNRHPNDITNASLNYAYAILASEVNKALVINGLDSYCGFLHFDRQKRTSLTFDLMEEFRQQLVDKVVFSLVNTKQISNDDLDKRNNSISLDVRKLIIGRVLDKVNSNINYEGENLSYAQIIDKQAKKIVNYLINGEKYTGFSLRW.

Residues E165, H230, and E245 each coordinate Mn(2+).

The protein belongs to the CRISPR-associated endonuclease Cas1 family. In terms of assembly, homodimer, forms a heterotetramer with a Cas2 homodimer. Mg(2+) is required as a cofactor. Mn(2+) serves as cofactor.

Its function is as follows. CRISPR (clustered regularly interspaced short palindromic repeat), is an adaptive immune system that provides protection against mobile genetic elements (viruses, transposable elements and conjugative plasmids). CRISPR clusters contain spacers, sequences complementary to antecedent mobile elements, and target invading nucleic acids. CRISPR clusters are transcribed and processed into CRISPR RNA (crRNA). Acts as a dsDNA endonuclease. Involved in the integration of spacer DNA into the CRISPR cassette. The chain is CRISPR-associated protein Cas1 3 from Methanobrevibacter ruminantium (strain ATCC 35063 / DSM 1093 / JCM 13430 / OCM 146 / M1) (Methanobacterium ruminantium).